We begin with the raw amino-acid sequence, 138 residues long: MRTLWIMAVLLVGVEGSLWQFGKMINYVMGESGVLQYLSYGCYCGLGGQGQPTDATDRCCFVHDCCYGKVTGCDPKIDSYTYSKKNGDVVCGGDDPCKKQICECDRVATTCFRDNKDTYDIKYWFYGAKNCQEKSEPC.

Positions Met1–Gly16 are cleaved as a signal peptide. Disulfide bonds link Cys42–Cys131, Cys44–Cys60, Cys59–Cys111, Cys65–Cys138, Cys66–Cys104, Cys73–Cys97, and Cys91–Cys102. Residues Tyr43, Gly47, and Gly48 each contribute to the Ca(2+) site. His63 is an active-site residue. A Ca(2+)-binding site is contributed by Asp64. The active site involves Asp105.

Belongs to the phospholipase A2 family. Group II subfamily. D49 sub-subfamily. As to quaternary structure, homodimer; non-covalently linked. It depends on Ca(2+) as a cofactor. Expressed by the venom gland.

It localises to the secreted. It catalyses the reaction a 1,2-diacyl-sn-glycero-3-phosphocholine + H2O = a 1-acyl-sn-glycero-3-phosphocholine + a fatty acid + H(+). With respect to regulation, inhibited by EDTA and bromophenacyl bromide (BPB). Its function is as follows. Snake venom phospholipase A2 (PLA2) that displays edema-inducing activities (activity that is inhibited by EDTA and dexamethasone), inhibits phospholipid-dependent collagen/ADP-induced platelet aggregation, possess hypotensive as well as anticoagulant activities. In addition, this enzyme shows bactericidal activity against E.coli and S.aureus. PLA2 catalyzes the calcium-dependent hydrolysis of the 2-acyl groups in 3-sn-phosphoglycerides. The protein is Acidic phospholipase A2 BthA-1 of Bothrops jararacussu (Jararacussu).